A 182-amino-acid chain; its full sequence is Flavodoxin (182 aa).

A Flavodoxin-like domain is found at Ile-4–Ala-173.

Belongs to the flavodoxin family. It depends on FMN as a cofactor.

In terms of biological role, low-potential electron donor to a number of redox enzymes. NifF is the electron donor to nitrogenase. This chain is Flavodoxin (nifF), found in Rhodobacter capsulatus (strain ATCC BAA-309 / NBRC 16581 / SB1003).